We begin with the raw amino-acid sequence, 435 residues long: MRKIIAGVFIFVFLISNLYAALVAEVTTGVIQKPLVTVVSDNVVDQFPQQVNSVIVADLNHNAKLQANDTIKYEIKQKQNIPWKSLKSDYVVLTKYTNNSYNNYTVEVQILKRNDTSYLQAITYKNINVSLMRTLAHKISNYVYQKLTGNQGFFLTKLAYVKVSNPYARYGRLYELIISDYDGYNKHVVLRQTDNPIATPSWSNDGRYIVYSSYSGGSMGVYTLEIATGKVTRITNYKGINSSPSLSPDGKEIALALSKGYSDQTNIYIMNLSTKALKRITINGINTAPKFSPNGQSIVFTSDREGRPNIYVASVNSKYPQSSILSTKIHQAYEPNYTPDGKNIVFMNQSSRTSGTQIADFNLANGSVTNITNGKADSSPTVSPYGDMVAYISTNTRGYSSLDMVSLDGDNHFNIETADNGNILIQSPSWSPKNF.

Positions 1 to 20 are cleaved as a signal peptide; it reads MRKIIAGVFIFVFLISNLYA.

The protein belongs to the TolB family. The Tol-Pal system is composed of five core proteins: the inner membrane proteins TolA, TolQ and TolR, the periplasmic protein TolB and the outer membrane protein Pal. They form a network linking the inner and outer membranes and the peptidoglycan layer.

The protein resides in the periplasm. Its function is as follows. Part of the Tol-Pal system, which plays a role in outer membrane invagination during cell division and is important for maintaining outer membrane integrity. This Francisella tularensis subsp. tularensis (strain WY96-3418) protein is Tol-Pal system protein TolB.